The following is a 199-amino-acid chain: uncharacterized protein (199 aa).

Residues 112–160 enclose the G-patch domain; that stretch reads PKSLGYRVLSQYGWSPQGDTAGLGLENQGRRAPVRAFRVKNDTIGLGTK.

This is an uncharacterized protein from Schizosaccharomyces pombe (strain 972 / ATCC 24843) (Fission yeast).